A 468-amino-acid polypeptide reads, in one-letter code: 3-isopropylmalate dehydratase large subunit (468 aa).

The [4Fe-4S] cluster site is built by Cys349, Cys409, and Cys412.

This sequence belongs to the aconitase/IPM isomerase family. LeuC type 1 subfamily. Heterodimer of LeuC and LeuD. The cofactor is [4Fe-4S] cluster.

The enzyme catalyses (2R,3S)-3-isopropylmalate = (2S)-2-isopropylmalate. Its pathway is amino-acid biosynthesis; L-leucine biosynthesis; L-leucine from 3-methyl-2-oxobutanoate: step 2/4. Its function is as follows. Catalyzes the isomerization between 2-isopropylmalate and 3-isopropylmalate, via the formation of 2-isopropylmaleate. The polypeptide is 3-isopropylmalate dehydratase large subunit (Nitrobacter hamburgensis (strain DSM 10229 / NCIMB 13809 / X14)).